We begin with the raw amino-acid sequence, 386 residues long: ATP phosphoribosyltransferase regulatory subunit (386 aa).

This sequence belongs to the class-II aminoacyl-tRNA synthetase family. HisZ subfamily. In terms of assembly, heteromultimer composed of HisG and HisZ subunits.

It is found in the cytoplasm. It functions in the pathway amino-acid biosynthesis; L-histidine biosynthesis; L-histidine from 5-phospho-alpha-D-ribose 1-diphosphate: step 1/9. Its function is as follows. Required for the first step of histidine biosynthesis. May allow the feedback regulation of ATP phosphoribosyltransferase activity by histidine. The sequence is that of ATP phosphoribosyltransferase regulatory subunit from Limosilactobacillus fermentum (strain NBRC 3956 / LMG 18251) (Lactobacillus fermentum).